A 421-amino-acid polypeptide reads, in one-letter code: MDLEAKVKKMGLGHEQGFGAPCLKCKEKCEGFELHFWRKICRNCKCGQEEHDVLLSNEEDRKVGKLFEDTKYTTLIAKLKSDGIPMYKRNVMILTNPVAAKKNVSINTVTYEWAPPVQNQALARQYMQMLPKEKQPVAGSEGAQYRKKQLAKQLPAHDQDPSKCHELSPKEVKEMEQFVKKYKSEALGVGDVKLPRDMNTQGPNRMYIPGGDRSTTTAVGAMEDKSAEHKRTQYSCYCCKLSMKEGDPAIYAERAGYDKLWHPACFVCSACHELLVDMIYFWKNGKLYCGRHYCDSEKPRCAGCDELIFSNEYTQAENQNWHLKHFCCFDCDNILAGEIYVMVNDKPVCKPCYVKNHAVVCQGCHNAIDPEVQRVSYNNFSWHASTECFLCSCCSRCLIGQKFMPVEGMVFCSVECKKMMS.

A PET domain is found at methionine 92–asparagine 199. Disordered regions lie at residues glutamate 133–cysteine 164 and lysine 193–arginine 213. A compositionally biased stretch (basic and acidic residues) spans proline 155 to cysteine 164. LIM zinc-binding domains follow at residues tyrosine 234–glutamate 297, proline 299–valine 359, and glutamine 362–serine 421.

It belongs to the prickle / espinas / testin family. In terms of assembly, interacts via LIM domain 1 with ZYX. Interacts (via LIM domain 3) with ENAH and VASP. Interacts with ALKBH4, talin, actin, alpha-actinin, GRIP1 and PXN. Interacts (via LIM domain 2) with ACTL7A (via N-terminus). Heterodimer with ACTL7A; the heterodimer interacts with ENAH to form a heterotrimer.

It is found in the cytoplasm. Its subcellular location is the cell junction. The protein resides in the focal adhesion. Scaffold protein that may play a role in cell adhesion, cell spreading and in the reorganization of the actin cytoskeleton. Plays a role in the regulation of cell proliferation. May act as a tumor suppressor. This is Testin (TES) from Muntiacus muntjak (Barking deer).